The primary structure comprises 148 residues: Protein ADM2 (148 aa).

An N-terminal signal peptide occupies residues 1–24 (MARIPTAALGCISLLCLQLPGSLS). Residues 25–98 (RSLGGDPRPV…HSGPRRHSGP (74 aa)) constitute a propeptide that is removed on maturation. 2 disordered regions span residues 26 to 57 (SLGG…APRP) and 70 to 101 (RGAG…PRRT). Cys-110 and Cys-115 are joined by a disulfide. At Tyr-147 the chain carries Tyrosine amide.

The protein belongs to the adrenomedullin family. In terms of tissue distribution, expressed in the esophagus, stomach, jejunum, ileum, ileocecum, ascending colon, transverse colon, descending colon and rectum. Expressed in myocardial cells of the heart, renal tubular cells, hypothalamus, and pituitary.

The protein localises to the secreted. Its function is as follows. Intermedin/ADM2 is a peptide hormone that plays a role as physiological regulator of gastrointestinal and cardiovascular bioactivities mediated by the CALCRL-RAMPs receptor complexes. Activates the cAMP-dependent pathway through interaction with CALCRL-RAMP3 receptor complex. This Homo sapiens (Human) protein is Protein ADM2.